The chain runs to 340 residues: Ketol-acid reductoisomerase (NADP(+)) (340 aa).

The region spanning 3–182 (VQMEYEKDVK…GAARVGLLET (180 aa)) is the KARI N-terminal Rossmann domain. Residues 26–29 (YGSQ), arginine 49, serine 53, and 83–86 (DEIQ) each bind NADP(+). Histidine 108 is an active-site residue. Glycine 134 provides a ligand contact to NADP(+). The KARI C-terminal knotted domain maps to 183–328 (TYKEETEEDL…AELRKAMPFV (146 aa)). Positions 191, 195, 227, and 231 each coordinate Mg(2+). Residue serine 252 participates in substrate binding.

This sequence belongs to the ketol-acid reductoisomerase family. Mg(2+) serves as cofactor.

The catalysed reaction is (2R)-2,3-dihydroxy-3-methylbutanoate + NADP(+) = (2S)-2-acetolactate + NADPH + H(+). It catalyses the reaction (2R,3R)-2,3-dihydroxy-3-methylpentanoate + NADP(+) = (S)-2-ethyl-2-hydroxy-3-oxobutanoate + NADPH + H(+). Its pathway is amino-acid biosynthesis; L-isoleucine biosynthesis; L-isoleucine from 2-oxobutanoate: step 2/4. It functions in the pathway amino-acid biosynthesis; L-valine biosynthesis; L-valine from pyruvate: step 2/4. In terms of biological role, involved in the biosynthesis of branched-chain amino acids (BCAA). Catalyzes an alkyl-migration followed by a ketol-acid reduction of (S)-2-acetolactate (S2AL) to yield (R)-2,3-dihydroxy-isovalerate. In the isomerase reaction, S2AL is rearranged via a Mg-dependent methyl migration to produce 3-hydroxy-3-methyl-2-ketobutyrate (HMKB). In the reductase reaction, this 2-ketoacid undergoes a metal-dependent reduction by NADPH to yield (R)-2,3-dihydroxy-isovalerate. This is Ketol-acid reductoisomerase (NADP(+)) from Streptococcus pneumoniae (strain CGSP14).